The following is an 822-amino-acid chain: uncharacterized protein (822 aa).

The Cytoplasmic segment spans residues 1–13 (MCHNSVRSGNKAG). Residues 14–34 (FLGIKFGSALLSIATGAIAIA) form a helical membrane-spanning segment. The Extracellular portion of the chain corresponds to 35–44 (LLCKFHDHEA). The chain crosses the membrane as a helical span at residues 45-65 (VLIVIVCSTLLYGIPSLISFI). At 66–76 (TETVFAPSKFH) the chain is on the cytoplasmic side. Residues 77 to 97 (IGYFYNVLNFALPLITMGCTV) form a helical membrane-spanning segment. Over 98–120 (DYFHNTLRSPISVQSESHRVYIT) the chain is Extracellular. The helical transmembrane segment at 121-141 (TLDSLLIFTLFINGIQLGFFL) threads the bilayer. Topologically, residues 142–822 (KDGNANNFGS…PVEELVSPSK (681 aa)) are cytoplasmic. Residues 271–290 (RNTQQATKVPTEKKSNHRSS) are disordered. The residue at position 690 (serine 690) is a Phosphoserine. Over residues 698-712 (TLQSSHSPTKSTSGN) the composition is skewed to polar residues. Disordered regions lie at residues 698–728 (TLQS…STVN) and 751–783 (NGEE…GYPE). Positions 761 to 776 (QSIQSSSSGSEQESAG) are enriched in low complexity.

The protein resides in the membrane. This is an uncharacterized protein from Saccharomyces cerevisiae (strain ATCC 204508 / S288c) (Baker's yeast).